The chain runs to 542 residues: Hydroxylamine reductase (542 aa).

Positions 3, 6, 15, and 21 each coordinate [4Fe-4S] cluster. Residues H238, E262, C307, C398, C426, C451, E485, and K487 each contribute to the hybrid [4Fe-2O-2S] cluster site. Cysteine persulfide is present on C398.

Belongs to the HCP family. The cofactor is [4Fe-4S] cluster. Hybrid [4Fe-2O-2S] cluster is required as a cofactor.

The protein resides in the cytoplasm. It carries out the reaction A + NH4(+) + H2O = hydroxylamine + AH2 + H(+). Functionally, catalyzes the reduction of hydroxylamine to form NH(3) and H(2)O. The sequence is that of Hydroxylamine reductase from Microcystis aeruginosa (strain NIES-843 / IAM M-2473).